A 441-amino-acid polypeptide reads, in one-letter code: Transducin-like enhancer protein 7 (441 aa).

2 disordered regions span residues 1–77 (MSGE…QWHL) and 91–119 (PDAQPGEAAESSPSFLLGSEVGQPYSSSS). Residues 27 to 49 (ESSGVSSQPEPQVQQQLGSLLGV) show a composition bias toward low complexity. Residues 62–76 (PADQETSTVTQQQWH) show a composition bias toward polar residues. The segment covering 108–119 (GSEVGQPYSSSS) has biased composition (low complexity). 5 WD repeats span residues 156 to 194 (FHGKRVYAVAISGSTHHVYTCGSGYIRVWDESALHAGEK), 204 to 243 (HPQDRVVTCKLFPDERSLITGGASQAVTLWDLAPTPQVRA), 247 to 285 (STGPTCYSLAVSSDAHICLACFHGFVEIWDLQNQILIRK), 286 to 325 (HEVPVYGSRCVDITGNIFWTGGEDTILYSWDLRSYQRLHQ), and 409 to 441 (EESSGILCCDVSSDNQYLVMGSSSSATIYQLLY).

Belongs to the WD repeat Groucho/TLE family.

The sequence is that of Transducin-like enhancer protein 7 from Homo sapiens (Human).